The following is a 161-amino-acid chain: Cytochrome c-type biogenesis protein CcmE (161 aa).

At 1 to 8 (MNPRRKKR) the chain is on the cytoplasmic side. The chain crosses the membrane as a helical; Signal-anchor for type II membrane protein span at residues 9-29 (LTLAVALVFGLGATIGLMLYA). Topologically, residues 30–161 (LSQNMDLFYT…SDEQKQGRVQ (132 aa)) are periplasmic. 2 residues coordinate heme: H129 and Y133.

Belongs to the CcmE/CycJ family.

The protein localises to the cell inner membrane. In terms of biological role, heme chaperone required for the biogenesis of c-type cytochromes. Transiently binds heme delivered by CcmC and transfers the heme to apo-cytochromes in a process facilitated by CcmF and CcmH. The chain is Cytochrome c-type biogenesis protein CcmE from Photobacterium profundum (strain SS9).